A 168-amino-acid polypeptide reads, in one-letter code: Photosystem I assembly protein Ycf3 (168 aa).

3 TPR repeats span residues 35–68 (AFTY…EIDP), 72–105 (SYIL…NPFL), and 120–153 (GEQA…TPGN).

This sequence belongs to the Ycf3 family.

The protein resides in the plastid. It is found in the chloroplast thylakoid membrane. In terms of biological role, essential for the assembly of the photosystem I (PSI) complex. May act as a chaperone-like factor to guide the assembly of the PSI subunits. This Illicium oligandrum (Star anise) protein is Photosystem I assembly protein Ycf3.